The primary structure comprises 296 residues: Protoheme IX farnesyltransferase 2 (296 aa).

The next 9 helical transmembrane spans lie at 7–27 (LLVAKPGIIFGNLIAVAGGYF), 36–56 (PMLLLATVIGLSLVVASGCVL), 83–103 (LKAALAHGLVLGVAGFGLLWW), 108–128 (LTTALAGFGYFVYVGLYSLWF), 134–154 (YGTLVGSLSGAMPPVVGYCAV), 163–183 (ASLLAIFCLWQMPHSYAIAIF), 207–227 (IHIVLYILAFMAATLALCLGG), 229–249 (AGYGYLLVAVAVSLWWLAIAL), and 265–285 (FAFSIVAITALSVMMSIDFQV).

This sequence belongs to the UbiA prenyltransferase family. Protoheme IX farnesyltransferase subfamily.

It is found in the cell inner membrane. It carries out the reaction heme b + (2E,6E)-farnesyl diphosphate + H2O = Fe(II)-heme o + diphosphate. It functions in the pathway porphyrin-containing compound metabolism; heme O biosynthesis; heme O from protoheme: step 1/1. Converts heme B (protoheme IX) to heme O by substitution of the vinyl group on carbon 2 of heme B porphyrin ring with a hydroxyethyl farnesyl side group. The chain is Protoheme IX farnesyltransferase 2 from Pseudomonas aeruginosa (strain UCBPP-PA14).